The following is a 957-amino-acid chain: Glycine dehydrogenase (decarboxylating) (957 aa).

Position 708 is an N6-(pyridoxal phosphate)lysine (K708).

Belongs to the GcvP family. As to quaternary structure, the glycine cleavage system is composed of four proteins: P, T, L and H. The cofactor is pyridoxal 5'-phosphate.

The enzyme catalyses N(6)-[(R)-lipoyl]-L-lysyl-[glycine-cleavage complex H protein] + glycine + H(+) = N(6)-[(R)-S(8)-aminomethyldihydrolipoyl]-L-lysyl-[glycine-cleavage complex H protein] + CO2. In terms of biological role, the glycine cleavage system catalyzes the degradation of glycine. The P protein binds the alpha-amino group of glycine through its pyridoxal phosphate cofactor; CO(2) is released and the remaining methylamine moiety is then transferred to the lipoamide cofactor of the H protein. This is Glycine dehydrogenase (decarboxylating) from Escherichia coli O81 (strain ED1a).